Consider the following 1164-residue polypeptide: DNA-directed RNA polymerase 132 kDa polypeptide (1164 aa).

It belongs to the RNA polymerase beta chain family. In terms of assembly, the DNA-dependent RNA polymerase used for intermediate and late genes expression consists of eight subunits (147) kDa, (133) kDa, (35) kDa, (30) kDa, (22) kDa, (19) kDa, (18) kDa and (7) kDa totalling more than 500 kDa in mass. The same holoenzyme, with the addition of the transcription-specificity factor RAP94, is used for early gene expression.

The protein localises to the virion. The catalysed reaction is RNA(n) + a ribonucleoside 5'-triphosphate = RNA(n+1) + diphosphate. Part of the DNA-dependent RNA polymerase which catalyzes the transcription of viral DNA into RNA using the four ribonucleoside triphosphates as substrates. Responsible for the transcription of early, intermediate and late genes. DNA-dependent RNA polymerase associates with the early transcription factor (ETF), itself composed of D6 and A7, thereby allowing the early genes transcription. Late transcription, and probably also intermediate transcription, require newly synthesized RNA polymerase. This chain is DNA-directed RNA polymerase 132 kDa polypeptide (RPO132), found in Cowpox virus (strain GRI-90 / Grishak) (CPV).